A 218-amino-acid chain; its full sequence is Phosphoglycolate phosphatase (218 aa).

Asp7 serves as the catalytic Nucleophile. Mg(2+)-binding residues include Asp7, Asp9, and Asp167.

This sequence belongs to the HAD-like hydrolase superfamily. CbbY/CbbZ/Gph/YieH family. Mg(2+) is required as a cofactor.

It carries out the reaction 2-phosphoglycolate + H2O = glycolate + phosphate. Its pathway is organic acid metabolism; glycolate biosynthesis; glycolate from 2-phosphoglycolate: step 1/1. Functionally, specifically catalyzes the dephosphorylation of 2-phosphoglycolate. Is involved in the dissimilation of the intracellular 2-phosphoglycolate formed during the DNA repair of 3'-phosphoglycolate ends, a major class of DNA lesions induced by oxidative stress. The protein is Phosphoglycolate phosphatase of Cereibacter sphaeroides (strain ATCC 17029 / ATH 2.4.9) (Rhodobacter sphaeroides).